A 295-amino-acid chain; its full sequence is UDP-N-acetylenolpyruvoylglucosamine reductase (295 aa).

The region spanning 23 to 188 is the FAD-binding PCMH-type domain; the sequence is KVGGPADFLA…ISAKFALKPG (166 aa). R167 is an active-site residue. S217 (proton donor) is an active-site residue. E287 is a catalytic residue.

Belongs to the MurB family. Requires FAD as cofactor.

The protein localises to the cytoplasm. The enzyme catalyses UDP-N-acetyl-alpha-D-muramate + NADP(+) = UDP-N-acetyl-3-O-(1-carboxyvinyl)-alpha-D-glucosamine + NADPH + H(+). The protein operates within cell wall biogenesis; peptidoglycan biosynthesis. Its function is as follows. Cell wall formation. In Streptococcus pyogenes serotype M3 (strain ATCC BAA-595 / MGAS315), this protein is UDP-N-acetylenolpyruvoylglucosamine reductase.